The chain runs to 171 residues: Co-chaperone protein HscB (171 aa).

Residues aspartate 2–leucine 74 form the J domain.

The protein belongs to the HscB family. Interacts with HscA and stimulates its ATPase activity. Interacts with IscU.

Its function is as follows. Co-chaperone involved in the maturation of iron-sulfur cluster-containing proteins. Seems to help targeting proteins to be folded toward HscA. This is Co-chaperone protein HscB from Shigella flexneri serotype 5b (strain 8401).